A 401-amino-acid chain; its full sequence is Phosphoglycerate kinase (401 aa).

Residues 21–23 (DLN), Arg-37, 60–63 (HLGR), Arg-119, and Arg-152 contribute to the substrate site. ATP-binding positions include Lys-203, Glu-325, and 351-354 (GGDT).

The protein belongs to the phosphoglycerate kinase family. In terms of assembly, monomer.

Its subcellular location is the cytoplasm. It carries out the reaction (2R)-3-phosphoglycerate + ATP = (2R)-3-phospho-glyceroyl phosphate + ADP. It functions in the pathway carbohydrate degradation; glycolysis; pyruvate from D-glyceraldehyde 3-phosphate: step 2/5. This chain is Phosphoglycerate kinase, found in Acidithiobacillus ferrooxidans (strain ATCC 23270 / DSM 14882 / CIP 104768 / NCIMB 8455) (Ferrobacillus ferrooxidans (strain ATCC 23270)).